A 32-amino-acid polypeptide reads, in one-letter code: Beta-amanitin proprotein (32 aa).

Residues 1 to 10 constitute a propeptide that is removed on maturation; that stretch reads MSDINATRLP. The cyclopeptide (Ile-Pro) cross-link spans 11–18; the sequence is IWGIGCDP. The 2'-cysteinyl-6'-hydroxytryptophan sulfoxide (Trp-Cys) cross-link spans 12-16; it reads WGIGC. Residues 19 to 32 constitute a propeptide that is removed on maturation; sequence CIGDDVTILLTRGE.

This sequence belongs to the MSDIN fungal toxin family. Processed by the macrocyclase-peptidase enzyme POPB to yield a toxic cyclic decapeptide. POPB first removes 10 residues from the N-terminus. Conformational trapping of the remaining peptide forces the enzyme to release this intermediate rather than proceed to macrocyclization. The enzyme rebinds the remaining peptide in a different conformation and catalyzes macrocyclization of the N-terminal 8 residues.

Toxin belonging to the bicyclic octapeptides amatoxins that acts by binding non-competitively to RNA polymerase II and greatly slowing the elongation of transcripts from target promoters. This chain is Beta-amanitin proprotein, found in Amanita phalloides (Death cap).